A 114-amino-acid polypeptide reads, in one-letter code: MKYVAAYLMTVLGGNEAPTAADVSRVLEPVGAEVNPEVLKTLIDAMQGKAAHEVISAGLEKLQKVPCGGGAAAAAPAAAAAAGGGDSSSAAKETKKEEPEEEEEDGDMGLSLFD.

Low complexity predominate over residues 76–91; sequence PAAAAAAGGGDSSSAA. The tract at residues 76 to 114 is disordered; it reads PAAAAAAGGGDSSSAAKETKKEEPEEEEEDGDMGLSLFD.

The protein belongs to the eukaryotic ribosomal protein P1/P2 family. P1 and P2 exist as dimers at the large ribosomal subunit. Post-translationally, phosphorylated.

Functionally, plays an important role in the elongation step of protein synthesis. This Eimeria tenella (Coccidian parasite) protein is Large ribosomal subunit protein P2.